Here is a 280-residue protein sequence, read N- to C-terminus: MKKLQLLAPAKVNYRLDVLGKRPDGYHELRMIMQRVDLCDEIEIALTDVPGIRVTCGRKGVPDGPGNIAWRAADALLKLSGKEVGIDISIAKKIPVGAGLGGGSSDAATVLMGVNELLGLGLTDERLMEIGVKLGADVPFFIFKKPALAEGIGDRLTALEEVPSLWVVLVNPGIHVSTAWVYQNLRLTTGNPITIIPRSYSSLDEVCALLSNDLEPVTCGRFPLVSEVKEVLLAAGARGSLMSGSGSTVFGLFDDENAARTAAAEIEKTRGWFAAAVRTI.

The active site involves Lys-11. ATP is bound at residue 95–105; the sequence is PVGAGLGGGSS. Residue Asp-137 is part of the active site.

It belongs to the GHMP kinase family. IspE subfamily.

It catalyses the reaction 4-CDP-2-C-methyl-D-erythritol + ATP = 4-CDP-2-C-methyl-D-erythritol 2-phosphate + ADP + H(+). The protein operates within isoprenoid biosynthesis; isopentenyl diphosphate biosynthesis via DXP pathway; isopentenyl diphosphate from 1-deoxy-D-xylulose 5-phosphate: step 3/6. Its function is as follows. Catalyzes the phosphorylation of the position 2 hydroxy group of 4-diphosphocytidyl-2C-methyl-D-erythritol. This chain is 4-diphosphocytidyl-2-C-methyl-D-erythritol kinase, found in Geobacter sp. (strain M21).